A 463-amino-acid polypeptide reads, in one-letter code: Type I restriction enzyme StySPI specificity subunit (463 aa).

The protein belongs to the type-I restriction system S methylase family. As to quaternary structure, the type I restriction/modification system is composed of three polypeptides R, M and S; the restriction enzyme has stoichiometry R(2)M(2)S(1) while the methyltransferase is M(2)S(1).

The specificity (S) subunit of a type I restriction enzyme; this subunit dictates DNA sequence specificity. The M and S subunits together form a methyltransferase (MTase) that methylates A-2 on the top strand and A-3 on the bottom strand of the sequence 5'-AACN(6)GTRC-3'. In the presence of the R subunit the complex can also act as an endonuclease, binding to the same target sequence but cutting the DNA some distance from this site. Whether the DNA is cut or modified depends on the methylation state of the target sequence. When the target site is unmodified, the DNA is cut. When the target site is hemimethylated, the complex acts as a maintenance MTase modifying the DNA so that both strands become methylated. After locating a non-methylated recognition site, the enzyme complex serves as a molecular motor that translocates DNA in an ATP-dependent manner until a collision occurs that triggers cleavage. The sequence is that of Type I restriction enzyme StySPI specificity subunit from Salmonella potsdam.